The sequence spans 335 residues: Mevalonate kinase (335 aa).

111 to 121 provides a ligand contact to ATP; that stretch reads PVGAGLGSSAA. Asp162 (proton acceptor) is an active-site residue.

This sequence belongs to the GHMP kinase family. Mevalonate kinase subfamily. Homodimer. Mg(2+) serves as cofactor.

The protein localises to the cytoplasm. The catalysed reaction is (R)-mevalonate + ATP = (R)-5-phosphomevalonate + ADP + H(+). The protein operates within isoprenoid biosynthesis; isopentenyl diphosphate biosynthesis via mevalonate pathway; isopentenyl diphosphate from (R)-mevalonate: step 1/3. Functionally, catalyzes the phosphorylation of (R)-mevalonate (MVA) to (R)-mevalonate 5-phosphate (MVAP). Functions in the mevalonate (MVA) pathway leading to isopentenyl diphosphate (IPP), a key precursor for the biosynthesis of isoprenoid compounds such as archaeal membrane lipids. The protein is Mevalonate kinase of Pyrococcus horikoshii (strain ATCC 700860 / DSM 12428 / JCM 9974 / NBRC 100139 / OT-3).